The sequence spans 277 residues: E3 ubiquitin-protein ligase CCNB1IP1 (277 aa).

The RING-type; atypical zinc finger occupies 4-51; that stretch reads CEDMLLCNYRKCRIKLSGYAWVTACSHIFCDQHGSGEFSRSPAICPAC. Residues 127-182 are a coiled coil; sequence QQIQSKDVELTSMKGEVTSMKKVLEEYKKKFSDISEKLMERNRQYQKLQGLYDSLR.

As to quaternary structure, interacts with CCNB1, UBE2L3 and NF2. Ubiquitinated; autoubiquitinated. Post-translationally, phosphorylated by CDK1 on serine or threonine residues (in vitro). As to expression, highly expressed in heart. Detected at intermediate levels in liver and kidney, and at low levels in placenta, brain and lung.

The protein resides in the nucleus. It is found in the chromosome. It carries out the reaction S-ubiquitinyl-[E2 ubiquitin-conjugating enzyme]-L-cysteine + [acceptor protein]-L-lysine = [E2 ubiquitin-conjugating enzyme]-L-cysteine + N(6)-ubiquitinyl-[acceptor protein]-L-lysine.. Its pathway is protein modification; protein ubiquitination. In terms of biological role, ubiquitin E3 ligase that acts as a limiting factor for crossing-over during meiosis: required during zygonema to limit the colocalization of RNF212 with MutS-gamma-associated recombination sites and thereby establish early differentiation of crossover and non-crossover sites. Later, it is directed by MutL-gamma to stably accumulate at designated crossover sites. Probably promotes the dissociation of RNF212 and MutS-gamma to allow the progression of recombination and the implementation of the final steps of crossing over. Modulates cyclin-B levels and participates in the regulation of cell cycle progression through the G2 phase. Overexpression causes delayed entry into mitosis. The protein is E3 ubiquitin-protein ligase CCNB1IP1 (CCNB1IP1) of Homo sapiens (Human).